Reading from the N-terminus, the 447-residue chain is Multidrug efflux pump SdrM (447 aa).

Helical transmembrane passes span 6–26 (IITVIALILIMFMSAIESSII), 42–62 (LISLIFTAYFIALVIANPIVG), 70–90 (IIYVAIAGLLLFSIGSFMCGL), 94–114 (FTMLIISRVIQGFGSGVLMSL), 134–154 (IVGSVWGISSIIGPLLGGGIL), 161–181 (WLFYINIPIAIIAIILVIWTF), 194–214 (FDTKGLTLFYVFIGLIMFALL), 217–237 (QLLLLNFLSFILAIVVAMCLF), 260–280 (VFITDLLTAICLMGFNLYIPV), 286–306 (LGLSPLQSGLVIFPLSVAWIT), 323–342 (IYLLSFTLLLVSSIIISFGI), 346–363 (VLIAFVLILAGLSFGYIY), 392–412 (LGASIGSTIMGYLYAIQSGIF), and 418–438 (NVLSAVAVISIGLIVLWVVFF).

This sequence belongs to the major facilitator superfamily.

It is found in the cell membrane. Energy-dependent drug efflux pump that increases resistance to antimicrobial agents such as norfloxacin, acriflavine and ethidium bromide. The polypeptide is Multidrug efflux pump SdrM (Staphylococcus aureus (strain N315)).